The primary structure comprises 228 residues: DNA mismatch repair protein MutH (228 aa).

It belongs to the MutH family.

Its subcellular location is the cytoplasm. Sequence-specific endonuclease that cleaves unmethylated GATC sequences. It is involved in DNA mismatch repair. This chain is DNA mismatch repair protein MutH, found in Yersinia pseudotuberculosis serotype O:1b (strain IP 31758).